The primary structure comprises 589 residues: Probable translation initiation factor IF-2 (589 aa).

The tr-type G domain maps to 14–231 (LRQPIVCVLG…GLAQRFLESE (218 aa)). The G1 stretch occupies residues 23-30 (GHVDHGKT). Position 23–30 (23–30 (GHVDHGKT)) interacts with GTP. The G2 stretch occupies residues 48 to 52 (GITQR). The interval 84–87 (DTPG) is G3. GTP is bound by residues 84 to 88 (DTPGH) and 138 to 141 (NKID). Residues 138–141 (NKID) form a G4 region. The segment at 206 to 208 (SAK) is G5.

Belongs to the TRAFAC class translation factor GTPase superfamily. Classic translation factor GTPase family. IF-2 subfamily.

Functionally, function in general translation initiation by promoting the binding of the formylmethionine-tRNA to ribosomes. Seems to function along with eIF-2. This is Probable translation initiation factor IF-2 from Thermoplasma volcanium (strain ATCC 51530 / DSM 4299 / JCM 9571 / NBRC 15438 / GSS1).